A 406-amino-acid polypeptide reads, in one-letter code: MQLFLLLCLVLLSPQGASLHRHHPREMKKRVEDLHVGATVAPSSRRDFTFDLYRALASAAPSQSIFFSPVSISMSLAMLSLGAGSSTKMQILEGLGLNLQKSSEKELHRGFQQLLQELNQPRDGFQLSLGNALFTDLVVDLQDTFVSAMKTLYLADTFPTNFRDSAGAMKQINDYVAKQTKGKIVDLLKNLDSNAVVIMVNYIFFKAKWETSFNHKGTQEQDFYVTSETVVRVPMMSREDQYHYLLDRNLSCRVVGVPYQGNATALFILPSEGKMQQVENGLSEKTLRKWLKMFKKRQLELYLPKFSIEGSYQLEKVLPSLGISNVFTSHADLSGISNHSNIQVSEMVHKAVVEVDESGTRAAAATGTIFTFRSARLNSQRLVFNRPFLMFIVDNNILFLGKVNRP.

A signal peptide spans 1–19 (MQLFLLLCLVLLSPQGASL). Residues 20–25 (HRHHPR) constitute a propeptide, removed in mature form. The O-linked (GalNAc...) threonine glycan is linked to Thr39. N-linked (GlcNAc...) asparagine glycans are attached at residues Asn249, Asn262, and Asn338.

This sequence belongs to the serpin family. Forms protease inhibiting heterodimers in extracellular body fluids with serine proteases such as activated protein C/coagulation factor V/F5, acrosin/ACR, chymotrypsinogen B/CTRB1, prothrombin/F2, factor Xa/F10, factor XI/F11, kallikrein/KLKB1, tissue kallikrein, trypsin/PRSS1, prostate specific antigen/KLK3, tissue plasminogen activator/PLAT and urinary plasminogen activator/PLAU. Forms membrane-anchored serine proteases inhibiting heterodimers with TMPRSS7 and TMPRSS11E. Interacts with SEMG2. In terms of processing, N- and O-glycosylated. N-glycosylation consists of a mixture of sialylated bi- (including sialyl-Lewis X epitopes), tri- and tetra-antennary complex-type chains; affects the maximal heparin- and thrombomodulin-enhanced rates of thrombin inhibition. O-glycosylated with core 1 or possibly core 8 glycans. Further modified with 2 sialic acid residues. Proteolytically cleaved. Inhibition of proteases is accompanied by formation of a stable enzyme-inhibitor complex and by degradation of the serpin to lower molecular weight derivatives. Proteolytically cleaved at the N-terminus; inhibits slightly the heparin- and thrombomodulin-enhanced rates of thrombin inhibition. Predominantly expressed in the epithelium of seminal vesicles. Expressed in the proximal tubular epithelium of the kidney. Expressed in the superficial and more differentiated epidermal keratinocytes of the skin. Expressed in megakaryocytes and platelets. Expressed poorly in kidney tumor cells compared to non tumor kidney tissues. Expressed in spermatozoa. Present in very high concentration in seminal plasma. Present in high concentration in plasma, synovial and Graaf follicle fluids. Present in low concentration in breast milk and in amniotic fluids. Present in very low concentration in urine, cerebrospinal fluids, saliva and tears (at protein level). Strongly expressed in liver. Expressed in kidney, spleen, pancreas, skeletal muscle, heart, testes, ovary, interstitial Leydig cells, epididymal glands, seminal vesicles and prostate.

It is found in the secreted. The protein resides in the extracellular space. Its activity is regulated as follows. Its inhibitory activity is greatly enhanced in the presence of glycosaminoglycans, heparin, thrombomodulin and phospholipids vesicles. In terms of biological role, heparin-dependent serine protease inhibitor acting in body fluids and secretions. Inactivates serine proteases by binding irreversibly to their serine activation site. Involved in the regulation of intravascular and extravascular proteolytic activities. Plays hemostatic roles in the blood plasma. Acts as a procoagulant and pro-inflammatory factor by inhibiting the anticoagulant activated protein C factor as well as the generation of activated protein C factor by the thrombin/thrombomodulin complex. Acts as an anticoagulant factor by inhibiting blood coagulation factors like prothrombin, factor XI, factor Xa, plasma kallikrein and fibrinolytic enzymes such as tissue- and urinary-type plasminogen activators. In seminal plasma, inactivates several serine proteases implicated in the reproductive system. Inhibits the serpin acrosin; indirectly protects component of the male genital tract from being degraded by excessive released acrosin. Inhibits tissue- and urinary-type plasminogen activator, prostate-specific antigen and kallikrein activities; has a control on the sperm motility and fertilization. Inhibits the activated protein C-catalyzed degradation of SEMG1 and SEMG2; regulates the degradation of semenogelin during the process of transfer of spermatozoa from the male reproductive tract into the female tract. In urine, inhibits urinary-type plasminogen activator and kallikrein activities. Inactivates membrane-anchored serine proteases activities such as MPRSS7 and TMPRSS11E. Inhibits urinary-type plasminogen activator-dependent tumor cell invasion and metastasis. May also play a non-inhibitory role in seminal plasma and urine as a hydrophobic hormone carrier by its binding to retinoic acid. This chain is Plasma serine protease inhibitor (SERPINA5), found in Homo sapiens (Human).